The sequence spans 258 residues: Chymotrypsin-2 (258 aa).

A signal peptide spans M1 to A17. The propeptide at A18 to R32 is activation peptide. The Peptidase S1 domain maps to V33–A255. A disulfide bridge links C59 with C75. Catalysis depends on charge relay system residues H74 and D119. Cystine bridges form between C182-C198 and C208-C232. S212 acts as the Charge relay system in catalysis.

Belongs to the peptidase S1 family. As to expression, after blood feeding, expression is induced in the midgut epithelium, followed by secretion into the midgut lumen.

It is found in the secreted. The catalysed reaction is Preferential cleavage: Tyr-|-Xaa, Trp-|-Xaa, Phe-|-Xaa, Leu-|-Xaa.. The polypeptide is Chymotrypsin-2 (CHYM2) (Anopheles gambiae (African malaria mosquito)).